We begin with the raw amino-acid sequence, 324 residues long: Lignin-forming anionic peroxidase (324 aa).

The first 22 residues, 1-22 (MSFLRFVGAILFLVAIFGASNA), serve as a signal peptide directing secretion. Glutamine 23 carries the post-translational modification Pyrrolidone carboxylic acid. Disulfide bonds link cysteine 33–cysteine 111, cysteine 66–cysteine 71, cysteine 117–cysteine 320, and cysteine 196–cysteine 228. A glycan (N-linked (GlcNAc...) asparagine) is linked at asparagine 35. The Proton acceptor role is filled by histidine 64. Positions 65, 68, 70, 72, and 74 each coordinate Ca(2+). Asparagine 150 carries N-linked (GlcNAc...) asparagine glycosylation. Proline 159 contacts substrate. Position 189 (histidine 189) interacts with heme b. Threonine 190 is a binding site for Ca(2+). A glycan (N-linked (GlcNAc...) asparagine) is linked at asparagine 207. Ca(2+) is bound by residues aspartate 242, threonine 245, and aspartate 250.

This sequence belongs to the peroxidase family. Classical plant (class III) peroxidase subfamily. It depends on Ca(2+) as a cofactor. Requires heme b as cofactor.

The protein localises to the secreted. The enzyme catalyses 2 a phenolic donor + H2O2 = 2 a phenolic radical donor + 2 H2O. In terms of biological role, removal of H(2)O(2), oxidation of toxic reductants, biosynthesis and degradation of lignin, suberization, auxin catabolism, response to environmental stresses such as wounding, pathogen attack and oxidative stress. These functions might be dependent on each isozyme/isoform in each plant tissue. Its function is as follows. Plays an integral role in secondary cell wall biosynthesis by the polymerization of cinnamyl alcohols into lignin and by forming rigid cross-links between cellulose, pectin, hydroxy-proline-rich glycoproteins, and lignin. This is Lignin-forming anionic peroxidase from Nicotiana tabacum (Common tobacco).